Consider the following 238-residue polypeptide: Fatty acid metabolism regulator protein (238 aa).

The HTH gntR-type domain maps to 6-74 (KGPASFAEKY…HGKPTRVNNF (69 aa)). A DNA-binding region (H-T-H motif) is located at residues 34–53 (ERELSELIGVTRTTLREVLQ).

Homodimer.

It is found in the cytoplasm. In terms of biological role, multifunctional regulator of fatty acid metabolism. This is Fatty acid metabolism regulator protein from Shewanella baltica (strain OS185).